The chain runs to 183 residues: Nucleoplasmin-like protein NO29 (183 aa).

A compositionally biased stretch (acidic residues) spans 126–166 (SDDEDLSGSEEEMEDEEEEEDDDDDDDDDDDDDDDDDEEEI). A disordered region spans residues 126–183 (SDDEDLSGSEEEMEDEEEEEDDDDDDDDDDDDDDDDDEEEITPIKPAKKPLKTLSRTF).

It belongs to the nucleoplasmin family.

Its subcellular location is the nucleus. It localises to the nucleolus. This is Nucleoplasmin-like protein NO29 from Xenopus laevis (African clawed frog).